A 410-amino-acid chain; its full sequence is Probable protein S-acyltransferase 6 (410 aa).

Transmembrane regions (helical) follow at residues 45–65 and 76–96; these read LGLT…FVAS and GVSI…LLML. The tract at residues 108–129 is disordered; that stretch reads NSHPPEPEVVDGNTGSGTSQTP. Residues 147-197 enclose the DHHC domain; sequence KYCDTCMLYRPPRCSHCSICNNCVERFDHHCPWVGQCIAQRNYRFFFMFVF. The active-site S-palmitoyl cysteine intermediate is the Cys177. Helical transmembrane passes span 191–211 and 235–255; these read FFFM…AFCC and SIAL…LTCF. Ser325 carries the phosphoserine modification.

It belongs to the DHHC palmitoyltransferase family.

It is found in the cell membrane. It carries out the reaction L-cysteinyl-[protein] + hexadecanoyl-CoA = S-hexadecanoyl-L-cysteinyl-[protein] + CoA. In terms of biological role, palmitoyl acyltransferase. The polypeptide is Probable protein S-acyltransferase 6 (PAT06) (Arabidopsis thaliana (Mouse-ear cress)).